Consider the following 143-residue polypeptide: Large ribosomal subunit protein uL16c (143 aa).

The protein belongs to the universal ribosomal protein uL16 family. As to quaternary structure, part of the 50S ribosomal subunit.

It localises to the plastid. The protein localises to the chloroplast. The protein is Large ribosomal subunit protein uL16c of Marchantia polymorpha (Common liverwort).